A 175-amino-acid polypeptide reads, in one-letter code: uncharacterized protein (175 aa).

A disordered region spans residues 113–175 (AQLPRDSRGN…RTRSGGLERL (63 aa)).

This is an uncharacterized protein from Bos taurus (Bovine).